A 58-amino-acid polypeptide reads, in one-letter code: Small ribosomal subunit protein bS21 (58 aa).

Residues 25–58 are disordered; sequence KAGTLQEARKREHYEKPSVKRKRKSEAARKRKKI. The segment covering 31-42 has biased composition (basic and acidic residues); that stretch reads EARKREHYEKPS. The span at 43 to 58 shows a compositional bias: basic residues; that stretch reads VKRKRKSEAARKRKKI.

Belongs to the bacterial ribosomal protein bS21 family.

In Streptococcus thermophilus (strain ATCC BAA-491 / LMD-9), this protein is Small ribosomal subunit protein bS21.